A 271-amino-acid chain; its full sequence is Dehydrodolichyl diphosphate synthase 7 (271 aa).

Residues 24 to 41 form a helical membrane-spanning segment; sequence FLFRVLCVGPIPTNISFI.

Belongs to the UPP synthase family. It depends on Mg(2+) as a cofactor.

It is found in the endoplasmic reticulum membrane. It participates in protein modification; protein glycosylation. Functionally, catalyzes cis-prenyl chain elongation to produce the polyprenyl backbone of dolichol, a glycosyl carrier-lipid required for the biosynthesis of several classes of glycoprotein. In Arabidopsis thaliana (Mouse-ear cress), this protein is Dehydrodolichyl diphosphate synthase 7.